We begin with the raw amino-acid sequence, 341 residues long: MNEKTDDIILAFESSADETSAAVVKNGNTILSNVVATQIASHQRFGGIVPEVASRHHLEWINRVTEEALTKAGINDPERQLSAVAATYGPGLVGSLLVGLMAGKTFAMVHHLPFIAVNHLAGHISAANFVKATVYPALAIMVSGGHTELLWMEKENTFQIIGTTLDDAAGEAFDKVGRILGLKYPAGKEIQEMAGHGKAVIKFPIAHTEDDFDFSFSGLKSSVLNYVHHHEQVSEEFNRNDVAASFQKAVVEAITEKSRLAIEKFQPKELLLGGGVAANLALRTAFENLSKEYKIELTEAPIKLSGDNAAMIGAAAYLNYKQRLFAPLDLNVDPSLNFARM.

Positions 119 and 123 each coordinate Fe cation. Substrate contacts are provided by residues 141-145, Asp174, Gly187, and Asn279; that span reads MVSGG. Asp307 provides a ligand contact to Fe cation.

The protein belongs to the KAE1 / TsaD family. Fe(2+) is required as a cofactor.

The protein localises to the cytoplasm. The enzyme catalyses L-threonylcarbamoyladenylate + adenosine(37) in tRNA = N(6)-L-threonylcarbamoyladenosine(37) in tRNA + AMP + H(+). Its function is as follows. Required for the formation of a threonylcarbamoyl group on adenosine at position 37 (t(6)A37) in tRNAs that read codons beginning with adenine. Is involved in the transfer of the threonylcarbamoyl moiety of threonylcarbamoyl-AMP (TC-AMP) to the N6 group of A37, together with TsaE and TsaB. TsaD likely plays a direct catalytic role in this reaction. This is tRNA N6-adenosine threonylcarbamoyltransferase from Oenococcus oeni (strain ATCC BAA-331 / PSU-1).